Here is a 581-residue protein sequence, read N- to C-terminus: NADH-quinone oxidoreductase subunit C/D (581 aa).

Positions 1–172 (MSAFELVTEL…PLFNMTASLF (172 aa)) are NADH dehydrogenase I subunit C. Residues 196-581 (ELMILNYGPH…IDYVMSDVDR (386 aa)) form an NADH dehydrogenase I subunit D region.

This sequence in the N-terminal section; belongs to the complex I 30 kDa subunit family. In the C-terminal section; belongs to the complex I 49 kDa subunit family. As to quaternary structure, NDH-1 is composed of 13 different subunits. Subunits NuoB, CD, E, F, and G constitute the peripheral sector of the complex.

The protein resides in the cell inner membrane. The catalysed reaction is a quinone + NADH + 5 H(+)(in) = a quinol + NAD(+) + 4 H(+)(out). In terms of biological role, NDH-1 shuttles electrons from NADH, via FMN and iron-sulfur (Fe-S) centers, to quinones in the respiratory chain. The immediate electron acceptor for the enzyme in this species is believed to be ubiquinone. Couples the redox reaction to proton translocation (for every two electrons transferred, four hydrogen ions are translocated across the cytoplasmic membrane), and thus conserves the redox energy in a proton gradient. This is NADH-quinone oxidoreductase subunit C/D from Rhodopseudomonas palustris (strain ATCC BAA-98 / CGA009).